We begin with the raw amino-acid sequence, 256 residues long: Proteasome subunit alpha (256 aa).

The disordered stretch occupies residues 226–256 (LLPSQEESGSTDGEASGDAGDDKKTGDDKKS). Over residues 245-256 (GDDKKTGDDKKS) the composition is skewed to basic and acidic residues.

Belongs to the peptidase T1A family. The 20S proteasome core is composed of 14 alpha and 14 beta subunits that assemble into four stacked heptameric rings, resulting in a barrel-shaped structure. The two inner rings, each composed of seven catalytic beta subunits, are sandwiched by two outer rings, each composed of seven alpha subunits. The catalytic chamber with the active sites is on the inside of the barrel. Has a gated structure, the ends of the cylinder being occluded by the N-termini of the alpha-subunits. Is capped by the proteasome-associated ATPase, ARC.

The protein localises to the cytoplasm. The protein operates within protein degradation; proteasomal Pup-dependent pathway. The formation of the proteasomal ATPase ARC-20S proteasome complex, likely via the docking of the C-termini of ARC into the intersubunit pockets in the alpha-rings, may trigger opening of the gate for substrate entry. Interconversion between the open-gate and close-gate conformations leads to a dynamic regulation of the 20S proteasome proteolysis activity. Functionally, component of the proteasome core, a large protease complex with broad specificity involved in protein degradation. In Saccharopolyspora erythraea (strain ATCC 11635 / DSM 40517 / JCM 4748 / NBRC 13426 / NCIMB 8594 / NRRL 2338), this protein is Proteasome subunit alpha.